A 148-amino-acid chain; its full sequence is Transcription antitermination protein NusB (148 aa).

It belongs to the NusB family.

Functionally, involved in transcription antitermination. Required for transcription of ribosomal RNA (rRNA) genes. Binds specifically to the boxA antiterminator sequence of the ribosomal RNA (rrn) operons. This is Transcription antitermination protein NusB from Nitrosococcus oceani (strain ATCC 19707 / BCRC 17464 / JCM 30415 / NCIMB 11848 / C-107).